Consider the following 378-residue polypeptide: Spermatogenic leucine zipper protein 1 (378 aa).

A disordered region spans residues 1-31 (MSDTDNSAEMPARCPSPNPAPGAKQEPPNSG). Residue serine 106 is modified to Phosphoserine. The segment at 116-122 (KNKIRFK) is interaction with PPP1CC isoform gamma-2. The interval 116 to 127 (KNKIRFKDDLFI) is helix-loop-helix motif. Positions 128–193 (HFDPEREQNT…HLRGEYRKLR (66 aa)) are basic motif. Positions 182–233 (SLHLRGEYRKLRNNMEQLLQEADHWSKQHNELSELMRSYQECQNETQETTDK) form a coiled coil. At serine 207 the chain carries Phosphoserine. Residues 252 to 273 (LEEQVKKLSHDTHALHLIAALL) form a leucine-zipper region.

In terms of assembly, interacts with PPP1CC isoform gamma-2. This interaction can prevent SPZ1 binding to the E-box and inhibits PPP1CC activity. Phosphorylated by MAPK1/ERK2 and MAPK3/ERK1. Expressed specifically in the testis and epidydimis. In the testis expressed in both germ cells and somatic cells (Sertoli and Leydig cells). Expressed in several tumor cell lines.

The protein localises to the cytoplasm. The protein resides in the nucleus. Its function is as follows. Transcription factor that binds to the DNA sequence 5'-CANNTG-3'(E box) and the G-box motif. Directly binds to a guanine-rich region of the PCNA promoter and up-regulates its expression which in turn induces cell transformation and tumor formation. May play an important role in the regulation of cell proliferation and differentiation during spermatogenesis. The sequence is that of Spermatogenic leucine zipper protein 1 (Spz1) from Mus musculus (Mouse).